The sequence spans 598 residues: Probable pectinesterase/pectinesterase inhibitor 34 (598 aa).

The disordered stretch occupies residues 1-40 (MGYERLGPSGATGSVTTSTTTAPILNQVSTSEQPENNNRR). The segment covering 7–23 (GPSGATGSVTTSTTTAP) has biased composition (low complexity). Polar residues predominate over residues 24–36 (ILNQVSTSEQPEN). A helical membrane pass occupies residues 46 to 66 (VVSSIVLAISLILAAAIFAGV). The pectinesterase inhibitor 34 stretch occupies residues 81 to 232 (RKPSQAISKA…SELVSNCLAI (152 aa)). Residues 284 to 582 (DIIVSKDGNG…FTVAEFIYGS (299 aa)) form a pectinesterase 34 region. The substrate site is built by Thr-360 and Gln-390. Asp-413 functions as the Proton donor; for pectinesterase activity in the catalytic mechanism. A disulfide bridge links Cys-427 with Cys-447. Residue Asp-434 is the Nucleophile; for pectinesterase activity of the active site. The substrate site is built by Arg-502 and Trp-504.

In the N-terminal section; belongs to the PMEI family. The protein in the C-terminal section; belongs to the pectinesterase family. In terms of tissue distribution, expressed in siliques.

The protein localises to the membrane. It catalyses the reaction [(1-&gt;4)-alpha-D-galacturonosyl methyl ester](n) + n H2O = [(1-&gt;4)-alpha-D-galacturonosyl](n) + n methanol + n H(+). The protein operates within glycan metabolism; pectin degradation; 2-dehydro-3-deoxy-D-gluconate from pectin: step 1/5. In terms of biological role, acts in the modification of cell walls via demethylesterification of cell wall pectin. In Arabidopsis thaliana (Mouse-ear cress), this protein is Probable pectinesterase/pectinesterase inhibitor 34 (PME34).